The primary structure comprises 556 residues: 2-succinyl-5-enolpyruvyl-6-hydroxy-3-cyclohexene-1-carboxylate synthase (556 aa).

Belongs to the TPP enzyme family. MenD subfamily. As to quaternary structure, homodimer. Requires Mg(2+) as cofactor. The cofactor is Mn(2+). Thiamine diphosphate is required as a cofactor.

It carries out the reaction isochorismate + 2-oxoglutarate + H(+) = 5-enolpyruvoyl-6-hydroxy-2-succinyl-cyclohex-3-ene-1-carboxylate + CO2. It participates in quinol/quinone metabolism; 1,4-dihydroxy-2-naphthoate biosynthesis; 1,4-dihydroxy-2-naphthoate from chorismate: step 2/7. Its pathway is quinol/quinone metabolism; menaquinone biosynthesis. Catalyzes the thiamine diphosphate-dependent decarboxylation of 2-oxoglutarate and the subsequent addition of the resulting succinic semialdehyde-thiamine pyrophosphate anion to isochorismate to yield 2-succinyl-5-enolpyruvyl-6-hydroxy-3-cyclohexene-1-carboxylate (SEPHCHC). This chain is 2-succinyl-5-enolpyruvyl-6-hydroxy-3-cyclohexene-1-carboxylate synthase, found in Escherichia coli (strain SMS-3-5 / SECEC).